The following is a 367-amino-acid chain: Germination protease (367 aa).

A propeptide spanning residues M1–D15 is cleaved from the precursor.

Belongs to the peptidase A25 family. As to quaternary structure, homotetramer. Post-translationally, autoproteolytically processed. The inactive tetrameric zymogen termed p46 autoprocesses to a smaller form termed p41, which is active only during spore germination.

It carries out the reaction Endopeptidase action with P4 Glu or Asp, P1 preferably Glu &gt; Asp, P1' hydrophobic and P2' Ala.. In terms of biological role, initiates the rapid degradation of small, acid-soluble proteins during spore germination. The chain is Germination protease from Bacillus mycoides (strain KBAB4) (Bacillus weihenstephanensis).